We begin with the raw amino-acid sequence, 217 residues long: GTP-binding protein yptV2 (217 aa).

Residue 20 to 27 coordinates GTP; the sequence is GDSGVGKS. An Effector region motif is present at residues 42-50; it reads FITTIGIDF. GTP contacts are provided by residues 68-72 and 126-129; these read DTAGQ and NKLD. Residues 198 to 217 form a disordered region; it reads QPVRLTSGSPSPAQGKSCCR. The span at 201-211 shows a compositional bias: polar residues; sequence RLTSGSPSPAQ. 2 S-geranylgeranyl cysteine lipidation sites follow: Cys-215 and Cys-216.

The protein belongs to the small GTPase superfamily. Rab family.

The protein localises to the cell membrane. Functionally, protein transport. Probably involved in vesicular traffic. The protein is GTP-binding protein yptV2 (YPTV2) of Volvox carteri (Green alga).